A 144-amino-acid polypeptide reads, in one-letter code: UPF0179 protein PF1381 (144 aa).

Belongs to the UPF0179 family.

In Pyrococcus furiosus (strain ATCC 43587 / DSM 3638 / JCM 8422 / Vc1), this protein is UPF0179 protein PF1381.